A 143-amino-acid polypeptide reads, in one-letter code: Transcriptional regulator MraZ (143 aa).

SpoVT-AbrB domains are found at residues 5–47 (EYDH…TLDE) and 76–119 (AVEV…DRET).

This sequence belongs to the MraZ family. In terms of assembly, forms oligomers.

Its subcellular location is the cytoplasm. It is found in the nucleoid. The polypeptide is Transcriptional regulator MraZ (Staphylococcus aureus (strain Mu3 / ATCC 700698)).